The chain runs to 503 residues: Adenosine deaminase 2-A (503 aa).

The first 24 residues, 1 to 24, serve as a signal peptide directing secretion; the sequence is MHVLFLGDLMWIYLLLLCCASCNG. Zn(2+) is bound by residues His-105 and His-107. A substrate-binding site is contributed by Asp-108. A glycan (N-linked (GlcNAc...) asparagine) is linked at Asn-120. An intrachain disulfide couples Cys-130 to Cys-152. 2 N-linked (GlcNAc...) asparagine glycosylation sites follow: Asn-167 and Asn-178. Substrate contacts are provided by residues 197-204 and His-286; that span reads WERFEQVF. Asn-290 is a glycosylation site (N-linked (GlcNAc...) asparagine). Gly-319 contacts substrate. His-349 contacts Zn(2+). The active-site Proton donor is the Glu-352. Residue Asn-371 is glycosylated (N-linked (GlcNAc...) asparagine). His-377 serves as the catalytic Proton acceptor. Asp-434 is a Zn(2+) binding site. Position 435 (Asp-435) interacts with substrate.

It belongs to the metallo-dependent hydrolases superfamily. Adenosine and AMP deaminases family. ADGF subfamily. Zn(2+) is required as a cofactor.

It localises to the secreted. It catalyses the reaction adenosine + H2O + H(+) = inosine + NH4(+). Adenosine deaminase that may contribute to the degradation of extracellular adenosine, a signaling molecule that controls a variety of cellular responses. May play a role in the regulation of cell proliferation. The chain is Adenosine deaminase 2-A from Danio rerio (Zebrafish).